The sequence spans 353 residues: uncharacterized protein (353 aa).

A signal peptide spans 1-30 (MHLRHLFSLRLRGSLLLGSLLVASSFSTQA).

This is an uncharacterized protein from Escherichia coli O157:H7.